Here is a 3411-residue protein sequence, read N- to C-terminus: Genome polyprotein (3411 aa).

The Cytoplasmic segment spans residues 1–104 (MSGRKAQGKT…LSSRKRRSHD (104 aa)). The interval 38–72 (PGPSRGVQGFIFFFLFNILTGKKITAHLKRLWKML) is hydrophobic; homodimerization of capsid protein C. The propeptide at 102–121 (SHDVLTVQFLILGMLLMTGG) is ER anchor for the capsid protein C, removed in mature form by serine protease NS3. Residues 105 to 125 (VLTVQFLILGMLLMTGGVTLV) traverse the membrane as a helical segment. Topologically, residues 126–244 (RKNRWLLLNV…GERQLQKIER (119 aa)) are extracellular. N-linked (GlcNAc...) asparagine; by host glycans are attached at residues Asn-134 and Asn-150. A helical transmembrane segment spans residues 245–265 (WFVRNPFFAVTALTIAYLVGS). The Cytoplasmic segment spans residues 266–270 (NMTQR). The helical transmembrane segment at 271–285 (VVIALLVLAVGPAYS) threads the bilayer. Over 286 to 730 (AHCIGITDRD…TVFGSAFQGL (445 aa)) the chain is Extracellular. 8 disulfide bridges follow: Cys-288/Cys-315, Cys-345/Cys-401, Cys-345/Cys-406, Cys-359/Cys-390, Cys-377/Cys-401, Cys-377/Cys-406, Cys-467/Cys-568, and Cys-585/Cys-615. The interval 383–396 (DRGWGNGCGLFGKG) is fusion peptide. The chain crosses the membrane as a helical span at residues 731–751 (FGGLNWITKVIMGAVLIWVGI). At 752–757 (NTRNMT) the chain is on the extracellular side. The helical transmembrane segment at 758 to 778 (MSMSMILVGVIMMFLSLGVGA) threads the bilayer. Residues 779–1132 (DQGCAINFGK…LVRSWVTAGE (354 aa)) lie on the Extracellular side of the membrane. 6 disulfide bridges follow: Cys-782-Cys-793, Cys-833-Cys-921, Cys-957-Cys-1002, Cys-1058-Cys-1107, Cys-1069-Cys-1091, and Cys-1090-Cys-1094. 2 N-linked (GlcNAc...) asparagine; by host glycosylation sites follow: Asn-908 and Asn-986. The chain crosses the membrane as a helical span at residues 1133 to 1153 (IHAVPFGLVSMMIAMEVVLRK). Residues 1154 to 1201 (RQGPKQMLVGGVVLLGAMLVGQVTLLDLLKLTVAVGLHFHEMNNGGDA) are Cytoplasmic-facing. Residues 1202 to 1222 (MYMALIAAFSIRPGLLIGFGL) traverse the membrane as a helical segment. The Lumenal portion of the chain corresponds to 1223-1287 (RTLWSPRERL…ILPLMALLTP (65 aa)). A helical transmembrane segment spans residues 1288 to 1308 (VTMAEVRLAAMFFCAVVIIGV). Residues 1309 to 1355 (LHQNFKDTSMQKTIPLVALTLTSYLGLTQPFLGLCAFLATRIFGRRS) lie on the Cytoplasmic side of the membrane. The chain crosses the membrane as a helical span at residues 1356–1376 (IPVNEALAAAGLVGVLAGLAF). At 1377–1378 (QE) the chain is on the lumenal side. A helical transmembrane segment spans residues 1379 to 1399 (MENFLGPIAVGGLLMMLVSVA). Residues 1400–1456 (GRVDGLELKKLGEVSWEEEAEISGSSARYDVALSEQGEFKLLSEEKVPWDQVVMTSL) lie on the Cytoplasmic side of the membrane. An interacts with and activates NS3 protease region spans residues 1407 to 1446 (LKKLGEVSWEEEAEISGSSARYDVALSEQGEFKLLSEEKV). The helical intramembrane region spans 1457–1477 (ALVGAALHPFALLLVLAGWLF). The Cytoplasmic portion of the chain corresponds to 1478-2157 (HVRGARRSGD…RNALSMMPEA (680 aa)). The 181-residue stretch at 1485–1665 (SGDVLWDIPT…EVKEEGKEEL (181 aa)) folds into the Peptidase S7 domain. Active-site charge relay system; for serine protease NS3 activity residues include His-1537, Asp-1561, and Ser-1622. The Helicase ATP-binding domain occupies 1669 to 1825 (PTMLKKGMTT…HSNGEIEDVQ (157 aa)). An important for RNA-binding region spans residues 1673-1676 (KKGM). 1682–1689 (FHPGAGKT) lines the ATP pocket. A DEAH box motif is present at residues 1773-1776 (DEAH). In terms of domain architecture, Helicase C-terminal spans 1820-1997 (EIEDVQTDIP…VRGGMVAPLY (178 aa)). Residue Lys-1877 is modified to N6-acetyllysine; by host. A helical membrane pass occupies residues 2158 to 2178 (MTIVMLFILAGLLTSGMVIFF). The Lumenal portion of the chain corresponds to 2179–2186 (MSPKGISR). Positions 2187 to 2207 (MSMAMGTMAGCGYLMFLGGVK) form an intramembrane region, helical. Residues 2208–2209 (PT) lie on the Lumenal side of the membrane. A helical membrane pass occupies residues 2210 to 2230 (HISYVMLIFFVLMVVVIPEPG). At 2231 to 2241 (QQRSIQDNQVA) the chain is on the cytoplasmic side. Residues 2242 to 2262 (YLIIGILTLVSAVAANELGML) form a helical membrane-spanning segment. Over 2263 to 2293 (EKTKEDLFGKKNLIPSSASPWSWPDLDLKPG) the chain is Lumenal. The segment at residues 2294–2314 (AAWTVYVGIVTMLSPMLHHWI) is an intramembrane region (helical). Residues 2315-2360 (KVEYGNLSLSGIAQSASVLSFMDKGIPFMKMNISVIMLLVSGWNSI) are Lumenal-facing. The helical transmembrane segment at 2361–2381 (TVMPLLCGIGCAMLHWSLILP) threads the bilayer. Topologically, residues 2382–2421 (GIKAQQSKLAQRRVFHGVAENPVVDGNPTVDIEEAPEMPA) are cytoplasmic. The chain crosses the membrane as a helical span at residues 2422–2442 (LYEKKLALYLLLALSLASVAM). At 2443–2445 (CRT) the chain is on the lumenal side. The chain crosses the membrane as a helical span at residues 2446 to 2466 (PFSLAEGIVLASAALGPLIEG). At 2467 to 3411 (NTSLLWNGPM…DADLQLGELI (945 aa)) the chain is on the cytoplasmic side. Positions 2507–2771 (GSANGKTLGE…DVILPIGTRS (265 aa)) constitute an mRNA cap 0-1 NS5-type MT domain. Ser-2562 serves as a coordination point for S-adenosyl-L-methionine. Position 2562 is a phosphoserine (Ser-2562). Lys-2567 serves as the catalytic For 2'-O-MTase activity. The S-adenosyl-L-methionine site is built by Gly-2592, Trp-2593, Thr-2610, Leu-2611, Asp-2637, and Ile-2638. The For 2'-O-MTase activity role is filled by Asp-2652. Ile-2653 contacts S-adenosyl-L-methionine. Catalysis depends on for 2'-O-MTase activity residues Lys-2688 and Glu-2724. Tyr-2726 contributes to the S-adenosyl-L-methionine binding site. The Nuclear localization signal signature appears at 2878-2911 (RKIMKVVNRWLFRHLAREKNPRLCTKEEFIAKVR). The Zn(2+) site is built by Glu-2945, His-2949, Cys-2954, and Cys-2957. A RdRp catalytic domain is found at 3035 to 3187 (GGFYADDTAG…RPIDDRFGLA (153 aa)). Residues His-3222, Cys-3238, and Cys-3357 each coordinate Zn(2+).

It in the N-terminal section; belongs to the class I-like SAM-binding methyltransferase superfamily. mRNA cap 0-1 NS5-type methyltransferase family. As to quaternary structure, homodimer. Interacts (via N-terminus) with host EXOC1 (via C-terminus); this interaction results in EXOC1 degradation through the proteasome degradation pathway. In terms of assembly, forms heterodimers with envelope protein E in the endoplasmic reticulum and Golgi. Homodimer; in the endoplasmic reticulum and Golgi. Interacts with protein prM. Interacts with non-structural protein 1. As to quaternary structure, homodimer; Homohexamer when secreted. Interacts with envelope protein E. In terms of assembly, interacts (via N-terminus) with serine protease NS3. Forms a heterodimer with serine protease NS3. May form homooligomers. As to quaternary structure, forms a heterodimer with NS2B. Interacts with non-structural protein 2A (via N-terminus). Interacts with NS4B. Interacts with unphosphorylated RNA-directed RNA polymerase NS5; this interaction stimulates RNA-directed RNA polymerase NS5 guanylyltransferase activity. NS3 interacts with host PDCD6IP; this interaction contributes to virion release. In terms of assembly, interacts with serine protease NS3. Homodimer. Interacts with host STAT2; this interaction prevents the establishment of cellular antiviral state. Interacts with serine protease NS3. Interacts with host TRIM23; this interaction leads to NS5 ubiquitination. Post-translationally, specific enzymatic cleavages in vivo yield mature proteins. The nascent capsid protein C contains a C-terminal hydrophobic domain that act as a signal sequence for translocation of prM into the lumen of the ER. Mature capsid protein C is cleaved at a site upstream of this hydrophobic domain by NS3. prM is cleaved in post-Golgi vesicles by a host furin, releasing the mature small envelope protein M, and peptide pr. Non-structural protein 2A-alpha, a C-terminally truncated form of non-structural protein 2A, results from partial cleavage by NS3. Specific enzymatic cleavages in vivo yield mature proteins peptide 2K acts as a signal sequence and is removed from the N-terminus of NS4B by the host signal peptidase in the ER lumen. Signal cleavage at the 2K-4B site requires a prior NS3 protease-mediated cleavage at the 4A-2K site. In terms of processing, cleaved in post-Golgi vesicles by a host furin, releasing the mature small envelope protein M, and peptide pr. This cleavage is incomplete as up to 30% of viral particles still carry uncleaved prM. N-glycosylated. Post-translationally, N-glycosylated. The excreted form is glycosylated and this is required for efficient secretion of the protein from infected cells. In terms of processing, polyubiquitinated; ubiquitination is probably mediated by host TRIM23 and is prerequisite for NS5-STAT2 interaction. NS5 is not ISGylated or sumoylated. Acetylated by host KAT5. Acetylation modulates NS3 RNA-binding and unwinding activities and plays an important positive role for viral replication. Post-translationally, phosphorylated on serines residues. This phosphorylation may trigger NS5 nuclear localization.

It is found in the virion. It localises to the host nucleus. Its subcellular location is the host cytoplasm. The protein localises to the host perinuclear region. The protein resides in the secreted. It is found in the virion membrane. It localises to the host endoplasmic reticulum membrane. It carries out the reaction Selective hydrolysis of -Xaa-Xaa-|-Yaa- bonds in which each of the Xaa can be either Arg or Lys and Yaa can be either Ser or Ala.. It catalyses the reaction RNA(n) + a ribonucleoside 5'-triphosphate = RNA(n+1) + diphosphate. The enzyme catalyses a ribonucleoside 5'-triphosphate + H2O = a ribonucleoside 5'-diphosphate + phosphate + H(+). The catalysed reaction is ATP + H2O = ADP + phosphate + H(+). It carries out the reaction a 5'-end (5'-triphosphoguanosine)-ribonucleoside in mRNA + S-adenosyl-L-methionine = a 5'-end (N(7)-methyl 5'-triphosphoguanosine)-ribonucleoside in mRNA + S-adenosyl-L-homocysteine. It catalyses the reaction a 5'-end (N(7)-methyl 5'-triphosphoguanosine)-ribonucleoside in mRNA + S-adenosyl-L-methionine = a 5'-end (N(7)-methyl 5'-triphosphoguanosine)-(2'-O-methyl-ribonucleoside) in mRNA + S-adenosyl-L-homocysteine + H(+). In terms of biological role, plays a role in virus budding by binding to the cell membrane and gathering the viral RNA into a nucleocapsid that forms the core of a mature virus particle. During virus entry, may induce genome penetration into the host cytoplasm after hemifusion induced by the surface proteins. Can migrate to the cell nucleus where it modulates host functions. Inhibits RNA silencing by interfering with host Dicer. Functionally, prevents premature fusion activity of envelope proteins in trans-Golgi by binding to envelope protein E at pH6.0. After virion release in extracellular space, gets dissociated from E dimers. Its function is as follows. Acts as a chaperone for envelope protein E during intracellular virion assembly by masking and inactivating envelope protein E fusion peptide. prM is the only viral peptide matured by host furin in the trans-Golgi network probably to avoid catastrophic activation of the viral fusion activity in acidic Golgi compartment prior to virion release. prM-E cleavage is inefficient, and many virions are only partially matured. These uncleaved prM would play a role in immune evasion. In terms of biological role, may play a role in virus budding. Exerts cytotoxic effects by activating a mitochondrial apoptotic pathway through M ectodomain. May display a viroporin activity. Binds to host cell surface receptor and mediates fusion between viral and cellular membranes. Envelope protein is synthesized in the endoplasmic reticulum in the form of heterodimer with protein prM. They play a role in virion budding in the ER, and the newly formed immature particle is covered with 60 spikes composed of heterodimer between precursor prM and envelope protein E. The virion is transported to the Golgi apparatus where the low pH causes dissociation of PrM-E heterodimers and formation of E homodimers. prM-E cleavage is inefficient, and many virions are only partially matured. These uncleaved prM would play a role in immune evasion. Functionally, involved in immune evasion, pathogenesis and viral replication. Once cleaved off the polyprotein, is targeted to three destinations: the viral replication cycle, the plasma membrane and the extracellular compartment. Essential for viral replication. Required for formation of the replication complex and recruitment of other non-structural proteins to the ER-derived membrane structures. Excreted as a hexameric lipoparticle that plays a role against host immune response. Antagonizing the complement function. Binds to the host macrophages and dendritic cells. Inhibits signal transduction originating from Toll-like receptor 3 (TLR3). Its function is as follows. Component of the viral RNA replication complex that functions in virion assembly and antagonizes the host immune response. In terms of biological role, required cofactor for the serine protease function of NS3. May have membrane-destabilizing activity and form viroporins. Displays three enzymatic activities: serine protease, NTPase and RNA helicase. NS3 serine protease, in association with NS2B, performs its autocleavage and cleaves the polyprotein at dibasic sites in the cytoplasm: C-prM, NS2A-NS2B, NS2B-NS3, NS3-NS4A, NS4A-2K and NS4B-NS5. NS3 RNA helicase binds RNA and unwinds dsRNA in the 3' to 5' direction. Also plays a role in virus assembly. Functionally, regulates the ATPase activity of the NS3 helicase activity. NS4A allows NS3 helicase to conserve energy during unwinding. Its function is as follows. Functions as a signal peptide for NS4B and is required for the interferon antagonism activity of the latter. In terms of biological role, induces the formation of ER-derived membrane vesicles where the viral replication takes place. Inhibits interferon (IFN)-induced host STAT1 phosphorylation and nuclear translocation, thereby preventing the establishment of cellular antiviral state by blocking the IFN-alpha/beta pathway. Replicates the viral (+) and (-) RNA genome, and performs the capping of genomes in the cytoplasm. NS5 methylates viral RNA cap at guanine N-7 and ribose 2'-O positions. Besides its role in RNA genome replication, also prevents the establishment of cellular antiviral state by blocking the interferon-alpha/beta (IFN-alpha/beta) signaling pathway. IFN-I induces binding of NS5 to host IFN-activated transcription factor STAT2, preventing its transcriptional activity. Host TRIM23 is the E3 ligase that interacts with and polyubiquitinates NS5 to promote its binding to STAT2 and trigger IFN-I signaling inhibition. In Aedes aegypti (Yellowfever mosquito), this protein is Genome polyprotein.